Reading from the N-terminus, the 494-residue chain is Apolipoprotein N-acyltransferase (494 aa).

Transmembrane regions (helical) follow at residues 16–36, 41–61, 62–82, 133–153, 173–193, and 202–222; these read TVGG…FIWI, LWAS…AILL, SYRW…IAFS, LIWG…FGLG, GGLA…IFAF, and LFAL…ILLA. Residues 235–461 enclose the CN hydrolase domain; sequence WQTNIPTRQK…EGVGVIDINV (227 aa). Residue glutamate 276 is the Proton acceptor of the active site. The active site involves lysine 325. Residue cysteine 373 is the Nucleophile of the active site. Residues 468–488 traverse the membrane as a helical segment; sequence YVRWGEIPLISSLLIVLCFIA.

The protein belongs to the CN hydrolase family. Apolipoprotein N-acyltransferase subfamily.

The protein localises to the cell inner membrane. It carries out the reaction N-terminal S-1,2-diacyl-sn-glyceryl-L-cysteinyl-[lipoprotein] + a glycerophospholipid = N-acyl-S-1,2-diacyl-sn-glyceryl-L-cysteinyl-[lipoprotein] + a 2-acyl-sn-glycero-3-phospholipid + H(+). The protein operates within protein modification; lipoprotein biosynthesis (N-acyl transfer). Catalyzes the phospholipid dependent N-acylation of the N-terminal cysteine of apolipoprotein, the last step in lipoprotein maturation. The polypeptide is Apolipoprotein N-acyltransferase (Prochlorococcus marinus (strain SARG / CCMP1375 / SS120)).